A 312-amino-acid polypeptide reads, in one-letter code: uncharacterized protein (312 aa).

The protein belongs to the asfivirus CP312R family.

The protein resides in the virion. This is an uncharacterized protein from African swine fever virus (isolate Tick/South Africa/Pretoriuskop Pr4/1996) (ASFV).